We begin with the raw amino-acid sequence, 499 residues long: Membrane-associated tyrosine- and threonine-specific cdc2-inhibitory kinase (499 aa).

An N-acetylmethionine modification is found at M1. The interval 1–29 (MLERPPALAMPMPTEGTPPPLSGTPIPVP) is disordered. A compositionally biased stretch (pro residues) spans 16–28 (GTPPPLSGTPIPV). Position 17 is a phosphothreonine (T17). S40 carries the phosphoserine modification. The disordered stretch occupies residues 42–72 (KRPRGLSRSLPPPPPAKGSIPISRLFPPRTP). S94 and S120 each carry phosphoserine. One can recognise a Protein kinase domain in the interval 110 to 359 (FQRLSRLGHG…AEALLALPVL (250 aa)). ATP is bound by residues 116-124 (LGHGSYGEV) and K139. 2 positions are modified to phosphoserine: S143 and S160. The active-site Proton acceptor is the D233. Mg(2+) is bound by residues N238, D251, and G253. The Membrane-association motif signature appears at 382-398 (LWQALLALLCWLWHGLA). An interaction with PIN1 region spans residues 398 to 499 (AHPASWLQPL…SLFEDTLDPT (102 aa)). Position 426 is a phosphoserine; by PLK1 (S426). The interval 437–499 (GPSLSPEAVL…SLFEDTLDPT (63 aa)) is interaction with CDC2-CCNB1. The segment at 451–485 (GSTSTPRSRCTPRDALDLSDINSEPPRGSFPSFEP) is disordered. Residues S469, S473, and S482 each carry the phosphoserine modification. A Phosphothreonine; by PLK1 modification is found at T495.

This sequence belongs to the protein kinase superfamily. Ser/Thr protein kinase family. WEE1 subfamily. Interacts with CDC2-CCNB1 complex. Can also interact with PIN1 when phosphorylated by CDC2-CCNB1. Autophosphorylated. Phosphorylated by CDC2-CCNB1 complexes on undefined serine and threonine residues. The phosphorylation by CDC2-CCNB1 complexes may inhibit the catalytic activity.

It is found in the endoplasmic reticulum membrane. Its subcellular location is the golgi apparatus membrane. It catalyses the reaction L-seryl-[protein] + ATP = O-phospho-L-seryl-[protein] + ADP + H(+). The enzyme catalyses L-threonyl-[protein] + ATP = O-phospho-L-threonyl-[protein] + ADP + H(+). With respect to regulation, negatively regulated by hyperphosphorylation during mitosis. The hyperphosphorylated form does not associate with CCNB1-CDC2 complexes. The PLK1 protein kinase may be required for mitotic phosphorylation. In terms of biological role, acts as a negative regulator of entry into mitosis (G2 to M transition) by phosphorylation of the CDK1 kinase specifically when CDK1 is complexed to cyclins. Mediates phosphorylation of CDK1 predominantly on 'Thr-14'. Also involved in Golgi fragmentation. May be involved in phosphorylation of CDK1 on 'Tyr-15' to a lesser degree, however tyrosine kinase activity is unclear and may be indirect. This is Membrane-associated tyrosine- and threonine-specific cdc2-inhibitory kinase (PKMYT1) from Homo sapiens (Human).